The chain runs to 78 residues: Acyl carrier protein (78 aa).

One can recognise a Carrier domain in the interval 2 to 77 (SEIASRVKAI…DAVSYIEANA (76 aa)). The residue at position 37 (serine 37) is an O-(pantetheine 4'-phosphoryl)serine.

It belongs to the acyl carrier protein (ACP) family. In terms of processing, 4'-phosphopantetheine is transferred from CoA to a specific serine of apo-ACP by AcpS. This modification is essential for activity because fatty acids are bound in thioester linkage to the sulfhydryl of the prosthetic group.

The protein localises to the cytoplasm. It participates in lipid metabolism; fatty acid biosynthesis. Its function is as follows. Carrier of the growing fatty acid chain in fatty acid biosynthesis. In Phocaeicola vulgatus (strain ATCC 8482 / DSM 1447 / JCM 5826 / CCUG 4940 / NBRC 14291 / NCTC 11154) (Bacteroides vulgatus), this protein is Acyl carrier protein.